A 93-amino-acid chain; its full sequence is Serine rich endogenous peptide 6 (93 aa).

The N-terminal stretch at 1-27 is a signal peptide; the sequence is MGTKCYSKLRYVVVLVLLLFVFPCSLS. 2 short sequence motifs (SCOOP motif) span residues 48–62 and 73–87; these read GIIA…APNI and ISEA…GGGR. Positions 52 to 93 are disordered; it reads GSSPSGQAPNINNNYHGRRLMISEARPSKSKKGGGREPESPG. Polar residues predominate over residues 53–66; sequence SSPSGQAPNINNNY. 2 short sequence motifs (sxS motif essential for MIK2 binding) span residues 54 to 56 and 79 to 81; these read SPS and SKS.

Belongs to the serine rich endogenous peptide (SCOOP) phytocytokine family. In terms of assembly, interacts with MIK2 (via extracellular leucine-rich repeat domain); this interaction triggers the formation of complex between MIK2 and the BAK1/SERK3 and SERK4 coreceptors, and subsequent BAK1 activation by phosphorylation. As to expression, mostly expressed in seedlings shoots, and, to a lower extent, in roots.

The protein localises to the cell membrane. Its subcellular location is the secreted. It localises to the extracellular space. The protein resides in the apoplast. Functionally, brassicaceae-specific phytocytokine (plant endogenous peptide released into the apoplast) perceived by MIK2 in a BAK1/SERK3 and SERK4 coreceptors-dependent manner, that modulates various physiological and antimicrobial processes including growth prevention and reactive oxygen species (ROS) response regulation. Inhibits root growth. In Arabidopsis thaliana (Mouse-ear cress), this protein is Serine rich endogenous peptide 6.